Here is a 346-residue protein sequence, read N- to C-terminus: MANAYKQAGVDIEAGYEAVSRMKKHVQTTMRKEVLGGLGGFGGMFDLSKFALEEPVLVSGTDGVGTKLMLAFMADKHDTIGIDAVAMCVNDIVVQGAEPLFFLDYIACGKAEPSKIENIVKGISEGCRQAGCALIGGETAEMPGMYSTEEYDLAGFTVGIVDKKKIVTGEKIEAGHVLIGLASSGIHSNGYSLVRKVLLEDGELSLDRIYGRLELPLGEELLKPTKIYVKPILELLKKYEVYGMAHITGGGFIENIPRMLPEEIGAEIELGSWEIQPIFSLLQEVGKLEEKEMFNIFNMGIGMVVAVKEEDAKDVVRLLEEQGETARIIGRTVQGAGVTFNGGTAL.

This sequence belongs to the AIR synthase family.

It is found in the cytoplasm. The enzyme catalyses 2-formamido-N(1)-(5-O-phospho-beta-D-ribosyl)acetamidine + ATP = 5-amino-1-(5-phospho-beta-D-ribosyl)imidazole + ADP + phosphate + H(+). The protein operates within purine metabolism; IMP biosynthesis via de novo pathway; 5-amino-1-(5-phospho-D-ribosyl)imidazole from N(2)-formyl-N(1)-(5-phospho-D-ribosyl)glycinamide: step 2/2. The protein is Phosphoribosylformylglycinamidine cyclo-ligase of Bacillus cereus (strain ATCC 10987 / NRS 248).